The sequence spans 724 residues: Probable metal-nicotianamine transporter YSL13 (724 aa).

Residues 1 to 54 (MATVPTPSEAHGGATPTAADVEMVEASELRRRGKPSGDRATGPSRDGAAAAAEE) are disordered. Transmembrane regions (helical) follow at residues 80–100 (AFVV…KLNL), 103–123 (GIIP…VRLW), 148–168 (CVVA…ILSM), 190–210 (LGWI…GLVP), 252–272 (LGIF…YTAT), 310–330 (IVNV…WPLI), 355–375 (VFIA…KMII), 423–443 (IPWY…IGTV), 455–475 (ILVA…GTGL), 487–507 (LAIF…LAGL), 541–561 (FVSQ…VFWL), 603–623 (LNLC…RDLV), 640–660 (FYIG…LFVW), and 675–695 (VASG…VLAL).

Belongs to the YSL (TC 2.A.67.2) family. In terms of tissue distribution, expressed in leaves and at low levels in root cortex.

Its subcellular location is the membrane. Its function is as follows. May be involved in the transport of nicotianamine-chelated metals. The polypeptide is Probable metal-nicotianamine transporter YSL13 (YSL13) (Oryza sativa subsp. japonica (Rice)).